We begin with the raw amino-acid sequence, 273 residues long: Type II iodothyronine deiodinase (273 aa).

Residues 1 to 9 lie on the Lumenal side of the membrane; it reads MGILSVDLL. A helical; Signal-anchor for type III membrane protein membrane pass occupies residues 10–34; that stretch reads ITLQILPVFFSNCLFLALYDSVILL. The Cytoplasmic portion of the chain corresponds to 35–273; the sequence is KHVVLLLSRS…KRUKKTRLAG (239 aa). Residue Sec-133 is part of the active site. Residues Sec-133 and Sec-266 are each a non-standard amino acid (selenocysteine).

The protein belongs to the iodothyronine deiodinase family. As to quaternary structure, predominantly monomer. Can form homodimers but homodimerization is not essential for enzyme activity. Interacts with USP20 and USP33. Interacts with MARCHF6. Post-translationally, ubiquitinated by MARCHF6, leading to its degradation by the proteasome. Deubiquitinated by USP20 and USP33. As to expression, isoform 1 is expressed in the lung, trachea, kidney, heart, skeletal muscle, placenta, fetal brain and several regions of the adult brain. Isoform 2 is expressed in the brain, heart, kidney and trachea.

Its subcellular location is the endoplasmic reticulum membrane. It catalyses the reaction 3,3',5-triiodo-L-thyronine + iodide + A + H(+) = L-thyroxine + AH2. The catalysed reaction is 3,3'-diiodo-L-thyronine + iodide + A + H(+) = 3,3',5'-triiodo-L-thyronine + AH2. The enzyme catalyses 3'-iodo-L-thyronine + iodide + A + H(+) = 3',5'-diiodo-L-thyronine + AH2. It carries out the reaction 3,3'-diiodothyronamine + iodide + A + H(+) = 3,3',5'-triiodothyronamine + AH2. It catalyses the reaction 3'-iodothyronamine + iodide + A + H(+) = 3',5'-diiodothyronamine + AH2. Its function is as follows. Plays a crucial role in the metabolism of thyroid hormones (TH) and has specific roles in TH activation and inactivation by deiodination. Catalyzes the deiodination of L-thyroxine (T4) to 3,5,3'-triiodothyronine (T3), 3,3',5'-triiodothyronine (rT3) to 3,3'-diiodothyronine (3,3'-T2) and 3',5'-diiodothyronine (3',5'-T2) to 3'-monoiodothyronine (3'-T1) via outer-ring deiodination (ORD). Catalyzes the phenolic ring deiodinations of 3,3',5'-triiodothyronamine and 3',5'- diiodothyronamine. This is Type II iodothyronine deiodinase (DIO2) from Homo sapiens (Human).